The chain runs to 330 residues: MANSLRTLFSVSTHGVFLNKRSSYRVRKVFVGMPLRICSEIPRFVSVSCIRSDMCGIMMLGKDVHDLLETSSGGNVEKGFLRWRNGGGMYHRSALIDSSALVEFGAVVHQEAILGAEVHIGSNTVIGSSVKIGPSTKIGNCSIGDLCVIHNGVCIGQDGFGFYVDDNGNMVKKPQTLNVKIGNRVEIGANTCIDRGSWRDTVIGDDTKIDNLVQIGHNVIIGKCCLFCGQVGIAGSAEIGDFVALGGRVAVRDHVSIVSKVRLAANSCVTKNITEPGDYGGFPAYKKTEPDSAFASDKHCFILQKILIQVPIHQWRRQIVEAQISSKRKP.

The N-terminal 52 residues, 1–52 (MANSLRTLFSVSTHGVFLNKRSSYRVRKVFVGMPLRICSEIPRFVSVSCIRS), are a transit peptide targeting the mitochondrion. 160–162 (FGF) contributes to the UDP-N-acetyl-alpha-D-glucosamine binding site. Hexadecanoate contacts are provided by Asp-210 and Gln-214. The active-site Proton acceptor is the His-217. UDP-N-acetyl-alpha-D-glucosamine is bound by residues Asn-218, Ser-236, and His-254.

The protein belongs to the transferase hexapeptide repeat family. LpxD subfamily. In terms of assembly, homotrimer.

The protein resides in the mitochondrion. It catalyses the reaction a UDP-3-O-[(3R)-3-hydroxyacyl]-alpha-D-glucosamine + a (3R)-hydroxyacyl-[ACP] = a UDP-2-N,3-O-bis[(3R)-3-hydroxyacyl]-alpha-D-glucosamine + holo-[ACP] + H(+). It participates in glycolipid biosynthesis; lipid IV(A) biosynthesis; lipid IV(A) from (3R)-3-hydroxytetradecanoyl-[acyl-carrier-protein] and UDP-N-acetyl-alpha-D-glucosamine: step 3/6. Involved in the biosynthesis of lipid A, a phosphorylated glycolipid that in bacteria anchors the lipopolysaccharide to the outer membrane of the cell. Lipid A-like molecules in plants may serve as structural components of the outer membranes of mitochondria and/or chloroplasts, or may be involved in signal transduction or plant defense responses. This is Probable UDP-3-O-acylglucosamine N-acyltransferase 1, mitochondrial (LPXD1) from Arabidopsis thaliana (Mouse-ear cress).